Reading from the N-terminus, the 287-residue chain is Nucleotide-binding protein Gbem_0872 (287 aa).

Residue 8 to 15 participates in ATP binding; it reads GLSGSGKS. 59-62 is a binding site for GTP; sequence DIRS.

This sequence belongs to the RapZ-like family.

In terms of biological role, displays ATPase and GTPase activities. In Citrifermentans bemidjiense (strain ATCC BAA-1014 / DSM 16622 / JCM 12645 / Bem) (Geobacter bemidjiensis), this protein is Nucleotide-binding protein Gbem_0872.